The following is a 144-amino-acid chain: Putative sugar phosphate isomerase RT0290 (144 aa).

His-12 is a substrate binding site. His-101 (proton donor) is an active-site residue. Residue Arg-135 coordinates substrate.

This sequence belongs to the LacAB/RpiB family.

The polypeptide is Putative sugar phosphate isomerase RT0290 (Rickettsia typhi (strain ATCC VR-144 / Wilmington)).